Reading from the N-terminus, the 331-residue chain is MKVSKVYTTIDAHVAGEPLRIITGGVPEIKGETQLERRWYCMEHLDYLREVLMYEPRGHHGMYGCIITPPASAHADFGVLFMHNEGWSTMCGHGIIAVITVGIETGMFETKQKFIIDSPAGEVIAYAKYNGSEVESVSFENVPSFVYKKDVPIKIDNYEFQVDIAFGGAFYAVVDSKEFGLKVDFKDLSAIQQWGGKIKHYIESKMEVKHPLEEGLKGIYGVIFSDDPKGEGATLRNVTIFADGQVDRSPCGTGTSARIATLFEKGILQKGEIFIHECITDGEFEGEVLSVTAVHTYEAVVPKVTGNAFITGFHQFVVDPRDDLNRGFLLG.

It belongs to the proline racemase family.

This is an uncharacterized protein from Bacillus anthracis.